A 711-amino-acid polypeptide reads, in one-letter code: Consortin (711 aa).

Disordered stretches follow at residues M1 to P157, A294 to Q332, E370 to S389, P394 to I432, and P457 to L496. The Cytoplasmic segment spans residues M1–S650. Over residues V63–S77 the composition is skewed to polar residues. Residues P109 to S120 show a composition bias toward basic residues. Basic and acidic residues-rich tracts occupy residues T396–K407 and P457–Q471. The segment covering D478 to G487 has biased composition (polar residues). The helical transmembrane segment at C651–L671 threads the bilayer. Over Y672–S711 the chain is Extracellular.

The protein belongs to the CNST family. In terms of assembly, interacts with connexins GJA1/CX43, GJB1/CX32, GJB2/CX26, GJB3/CX31, GJB6/CX30 and GJC1/CX45. Also interacts with GGA1 and GGA2. Does not interact with PANX1.

It localises to the cell membrane. It is found in the golgi apparatus. The protein localises to the trans-Golgi network membrane. Its subcellular location is the cytoplasmic vesicle. The protein resides in the secretory vesicle. Required for targeting of connexins to the plasma membrane. The sequence is that of Consortin (Cnst) from Mus musculus (Mouse).